The chain runs to 567 residues: uncharacterized protein (567 aa).

The next 10 membrane-spanning stretches (helical) occupy residues 65 to 85, 92 to 112, 190 to 210, 220 to 240, 302 to 322, 353 to 373, 412 to 432, 434 to 454, 473 to 493, and 503 to 523; these read LSLFGIFSISFSVLGMLPSVA, LWYVGYPGLLWAWLIAMFFLI, WQWFLLAVAIQCFNCVLACLP, VATYLNTAFLFIAGITILAYG, AIVMTAVIGGVVGWIMQIIVA, LGILSLTIISAIIMGQSALIA, IISILILFLTFAGTVTLDAVF, VGAVAAFIAFTVPIAIRVFFT, IGLLAVSFVALMIPILCFPSV, and WTCLVYGGPMLFTLVWYAISA.

It belongs to the amino acid-polyamine-organocation (APC) superfamily.

It localises to the membrane. This is an uncharacterized protein from Schizosaccharomyces pombe (strain 972 / ATCC 24843) (Fission yeast).